The chain runs to 140 residues: MKKIVATGTFDILHPGHIYYLEESKKLGDELWVIVAREKNVVHKPRPIVSEDQRLKMIQSLKCVDHAVLGDQTDMYKPIREIDPAVITIGFNQKWSEEKLRADLAERNICADVVRISEYTGMPFTSSTKIIDEAVRRRTK.

Residues 9–10, 14–17, N92, and Y119 each bind ATP; these read TF and HPGH.

The protein belongs to the archaeal FAD synthase family. Homodimer. It depends on a divalent metal cation as a cofactor.

It carries out the reaction FMN + ATP + H(+) = FAD + diphosphate. Its pathway is cofactor biosynthesis; FAD biosynthesis; FAD from FMN: step 1/1. Its function is as follows. Catalyzes the transfer of the AMP portion of ATP to flavin mononucleotide (FMN) to produce flavin adenine dinucleotide (FAD) coenzyme. The polypeptide is FAD synthase (Methanocorpusculum labreanum (strain ATCC 43576 / DSM 4855 / Z)).